A 262-amino-acid chain; its full sequence is Adenosylcobinamide-GDP ribazoletransferase (262 aa).

4 helical membrane passes run 43-63 (PLAG…LGAI), 121-141 (VALI…LPLL), 145-165 (GGGV…VWHW), and 195-215 (GVIL…AVLL).

This sequence belongs to the CobS family. It depends on Mg(2+) as a cofactor.

It is found in the cell inner membrane. The enzyme catalyses alpha-ribazole + adenosylcob(III)inamide-GDP = adenosylcob(III)alamin + GMP + H(+). It carries out the reaction alpha-ribazole 5'-phosphate + adenosylcob(III)inamide-GDP = adenosylcob(III)alamin 5'-phosphate + GMP + H(+). Its pathway is cofactor biosynthesis; adenosylcobalamin biosynthesis; adenosylcobalamin from cob(II)yrinate a,c-diamide: step 7/7. Joins adenosylcobinamide-GDP and alpha-ribazole to generate adenosylcobalamin (Ado-cobalamin). Also synthesizes adenosylcobalamin 5'-phosphate from adenosylcobinamide-GDP and alpha-ribazole 5'-phosphate. The chain is Adenosylcobinamide-GDP ribazoletransferase from Sinorhizobium medicae (strain WSM419) (Ensifer medicae).